The following is a 941-amino-acid chain: UvrABC system protein A (941 aa).

Position 37–44 (37–44 (GLSGSGKS)) interacts with ATP. The C4-type zinc finger occupies 260–287 (CFKCKMSFEELEPLSFSFNSPKGACESC). ABC transporter domains follow at residues 316-585 (IFGY…NNHS) and 605-937 (KEKH…KFLA). 637 to 644 (GVSGSGKS) provides a ligand contact to ATP. The C4-type zinc-finger motif lies at 737–763 (CEKCQGDGDIKIEMHFLPDVLVQCDSC).

Belongs to the ABC transporter superfamily. UvrA family. As to quaternary structure, forms a heterotetramer with UvrB during the search for lesions.

Its subcellular location is the cytoplasm. In terms of biological role, the UvrABC repair system catalyzes the recognition and processing of DNA lesions. UvrA is an ATPase and a DNA-binding protein. A damage recognition complex composed of 2 UvrA and 2 UvrB subunits scans DNA for abnormalities. When the presence of a lesion has been verified by UvrB, the UvrA molecules dissociate. The chain is UvrABC system protein A from Helicobacter pylori (strain J99 / ATCC 700824) (Campylobacter pylori J99).